We begin with the raw amino-acid sequence, 513 residues long: 2-isopropylmalate synthase (513 aa).

In terms of domain architecture, Pyruvate carboxyltransferase spans 5–268 (LIIFDTTLRD…DVGVDTTQIV (264 aa)). Residues aspartate 14, histidine 202, histidine 204, and asparagine 239 each contribute to the Mn(2+) site. The tract at residues 394–513 (RFVSLSQRSE…KSSEKLNPQI (120 aa)) is regulatory domain.

Belongs to the alpha-IPM synthase/homocitrate synthase family. LeuA type 1 subfamily. In terms of assembly, homodimer. It depends on Mn(2+) as a cofactor.

The protein resides in the cytoplasm. The catalysed reaction is 3-methyl-2-oxobutanoate + acetyl-CoA + H2O = (2S)-2-isopropylmalate + CoA + H(+). It participates in amino-acid biosynthesis; L-leucine biosynthesis; L-leucine from 3-methyl-2-oxobutanoate: step 1/4. Its function is as follows. Catalyzes the condensation of the acetyl group of acetyl-CoA with 3-methyl-2-oxobutanoate (2-ketoisovalerate) to form 3-carboxy-3-hydroxy-4-methylpentanoate (2-isopropylmalate). The sequence is that of 2-isopropylmalate synthase from Ralstonia nicotianae (strain ATCC BAA-1114 / GMI1000) (Ralstonia solanacearum).